The chain runs to 50 residues: Temporin-SHc (50 aa).

Positions 1–10 (FLGTINLSLC) are cleaved as a signal peptide. Residues 11 to 35 (EQERDADEEERRDEPDGSNVEVEKR) constitute a propeptide that is removed on maturation. A Phenylalanine amide modification is found at Phe48.

Expressed by the skin glands.

The protein resides in the secreted. It is found in the target cell membrane. Amphipathic alpha-helical antimicrobial peptide with potent activity against some Gram-positive bacteria (MIC=4-&gt;80 uM), potent activity against fungi (MIC=10-20 uM), and no activity against Gram-negative bacteria. Does not display anti-leishmania activity. Does not show hemolytic activity (LC(50)&gt;80 uM). The polypeptide is Temporin-SHc (Pelophylax saharicus (Sahara frog)).